The following is a 328-amino-acid chain: D-cysteine desulfhydrase (328 aa).

Lys-51 carries the post-translational modification N6-(pyridoxal phosphate)lysine.

It belongs to the ACC deaminase/D-cysteine desulfhydrase family. As to quaternary structure, homodimer. Pyridoxal 5'-phosphate is required as a cofactor.

It catalyses the reaction D-cysteine + H2O = hydrogen sulfide + pyruvate + NH4(+) + H(+). Its function is as follows. Catalyzes the alpha,beta-elimination reaction of D-cysteine and of several D-cysteine derivatives. It could be a defense mechanism against D-cysteine. This Shigella flexneri serotype 5b (strain 8401) protein is D-cysteine desulfhydrase.